The primary structure comprises 549 residues: Threonine--tRNA ligase catalytic subunit (549 aa).

A catalytic region spans residues Asp142–Pro437. Zn(2+) is bound by residues Cys235, His286, and His414.

It belongs to the class-II aminoacyl-tRNA synthetase family. As to quaternary structure, homodimer. Probably interacts with its editing subunit. Requires Zn(2+) as cofactor.

Its subcellular location is the cytoplasm. The enzyme catalyses tRNA(Thr) + L-threonine + ATP = L-threonyl-tRNA(Thr) + AMP + diphosphate + H(+). Functionally, catalyzes the attachment of threonine to tRNA(Thr) in a two-step reaction: L-threonine is first activated by ATP to form Thr-AMP and then transferred to the acceptor end of tRNA(Thr). Also activates L-serine and transfers it to tRNA(Thr) but cannot deacylate incorrectly charged amino acid; unlike most archaea the editing function is found in a freestanding protein. This is Threonine--tRNA ligase catalytic subunit from Sulfolobus acidocaldarius (strain ATCC 33909 / DSM 639 / JCM 8929 / NBRC 15157 / NCIMB 11770).